Consider the following 85-residue polypeptide: Probable Thioredoxin (85 aa).

Residues 2-85 form the Glutaredoxin domain; sequence VVNIEVFTSP…LFEAINDEME (84 aa). An intrachain disulfide couples cysteine 13 to cysteine 16.

Belongs to the glutaredoxin family.

It localises to the cytoplasm. In terms of biological role, acts to maintain redox homeostasis; functions as a protein disulfide reductase. This chain is Probable Thioredoxin, found in Methanothermobacter thermautotrophicus (strain ATCC 29096 / DSM 1053 / JCM 10044 / NBRC 100330 / Delta H) (Methanobacterium thermoautotrophicum).